A 358-amino-acid chain; its full sequence is 3-isopropylmalate dehydrogenase (358 aa).

Gly75–Glu88 serves as a coordination point for NAD(+). Substrate contacts are provided by Arg96, Arg106, Arg135, and Asp225. The Mg(2+) site is built by Asp225, Asp249, and Asp253. NAD(+) is bound at residue Gly283 to Asn295.

The protein belongs to the isocitrate and isopropylmalate dehydrogenases family. LeuB type 1 subfamily. In terms of assembly, homodimer. Mg(2+) is required as a cofactor. Mn(2+) serves as cofactor.

The protein localises to the cytoplasm. It carries out the reaction (2R,3S)-3-isopropylmalate + NAD(+) = 4-methyl-2-oxopentanoate + CO2 + NADH. The protein operates within amino-acid biosynthesis; L-leucine biosynthesis; L-leucine from 3-methyl-2-oxobutanoate: step 3/4. Its function is as follows. Catalyzes the oxidation of 3-carboxy-2-hydroxy-4-methylpentanoate (3-isopropylmalate) to 3-carboxy-4-methyl-2-oxopentanoate. The product decarboxylates to 4-methyl-2 oxopentanoate. The chain is 3-isopropylmalate dehydrogenase from Leptospira interrogans serogroup Icterohaemorrhagiae serovar copenhageni (strain Fiocruz L1-130).